A 394-amino-acid polypeptide reads, in one-letter code: G2/mitotic-specific cyclin-B (394 aa).

The segment at 360–394 is disordered; sequence QSHPSPNSRLDQEEDMASSKFMSDQQATQELKSIR. Residues 379 to 394 show a composition bias toward polar residues; that stretch reads KFMSDQQATQELKSIR.

It belongs to the cyclin family. Cyclin AB subfamily. Interacts with the CDK1 protein kinase to form a serine/threonine kinase holoenzyme complex also known as maturation promoting factor (MPF). The cyclin subunit imparts substrate specificity to the complex.

Its function is as follows. Essential for the control of the cell cycle at the G2/M (mitosis) transition. This chain is G2/mitotic-specific cyclin-B, found in Patiria pectinifera (Starfish).